Consider the following 179-residue polypeptide: MQTPVSVNEKKEFIRWFLNHYQLKRRECVWILNYLMSHDSLMEKVHFVEQAEFCPRGIIMSTHCVDEVPFRFYKENIMTTDAEKSFHDIRLNKQQDLFIQLNFRSAYRSPEYAAVLETNPHIPKDLYENEKDKDLAEKVLEHSIATFQKERLMKEIDEALDRHDQETFNKLARELSLLS.

The protein belongs to the UPF0302 family.

The protein is UPF0302 protein BPUM_1989 of Bacillus pumilus (strain SAFR-032).